We begin with the raw amino-acid sequence, 239 residues long: Adapter protein MecA (239 aa).

The span at glutamate 118–glycine 128 shows a compositional bias: basic and acidic residues. Residues glutamate 118–arginine 137 are disordered.

Belongs to the MecA family. As to quaternary structure, homodimer.

Its function is as follows. Enables the recognition and targeting of unfolded and aggregated proteins to the ClpC protease or to other proteins involved in proteolysis. This Staphylococcus aureus (strain bovine RF122 / ET3-1) protein is Adapter protein MecA.